Here is a 388-residue protein sequence, read N- to C-terminus: Chorismate synthase (388 aa).

Arginine 39 and arginine 45 together coordinate NADP(+). FMN-binding positions include arginine 130–serine 132, asparagine 251–alanine 252, glycine 296, lysine 311–threonine 315, and arginine 337.

It belongs to the chorismate synthase family. In terms of assembly, homotetramer. Requires FMNH2 as cofactor.

It catalyses the reaction 5-O-(1-carboxyvinyl)-3-phosphoshikimate = chorismate + phosphate. It functions in the pathway metabolic intermediate biosynthesis; chorismate biosynthesis; chorismate from D-erythrose 4-phosphate and phosphoenolpyruvate: step 7/7. Catalyzes the anti-1,4-elimination of the C-3 phosphate and the C-6 proR hydrogen from 5-enolpyruvylshikimate-3-phosphate (EPSP) to yield chorismate, which is the branch point compound that serves as the starting substrate for the three terminal pathways of aromatic amino acid biosynthesis. This reaction introduces a second double bond into the aromatic ring system. The sequence is that of Chorismate synthase from Streptococcus agalactiae serotype Ia (strain ATCC 27591 / A909 / CDC SS700).